The chain runs to 118 residues: Large ribosomal subunit protein bL19 (118 aa).

The protein belongs to the bacterial ribosomal protein bL19 family.

This protein is located at the 30S-50S ribosomal subunit interface and may play a role in the structure and function of the aminoacyl-tRNA binding site. The chain is Large ribosomal subunit protein bL19 from Helicobacter pylori (strain HPAG1).